Reading from the N-terminus, the 515-residue chain is Tabersonine 6,7-epoxidase isoform 2 (515 aa).

A helical membrane pass occupies residues 1 to 21; the sequence is MEFVVSPFAFLIFFFILLKMI. Asparagine 173, asparagine 259, and asparagine 352 each carry an N-linked (GlcNAc...) asparagine glycan. Cysteine 449 is a heme binding site.

The protein belongs to the cytochrome P450 family. Heme is required as a cofactor. As to expression, mainly expressed in aerial organs, including stems, leaves and flowers.

Its subcellular location is the endoplasmic reticulum membrane. The catalysed reaction is (-)-tabersonine + reduced [NADPH--hemoprotein reductase] + O2 = lochnericine + oxidized [NADPH--hemoprotein reductase] + H2O + H(+). The protein operates within alkaloid biosynthesis. Its function is as follows. Component of the monoterpenoid indole alkaloids (MIAs, e.g. echitovenine, tabersonine, lochnericine, 19-hydroxytabersonine and horhammericine) biosynthetic pathway; MIAs are used in cancer treatment and other medical applications. Cytochrome P450 catalyzing the conversion of tabersonine to lochnericine. The sequence is that of Tabersonine 6,7-epoxidase isoform 2 from Catharanthus roseus (Madagascar periwinkle).